We begin with the raw amino-acid sequence, 70 residues long: Small ribosomal subunit protein bS21 (70 aa).

Belongs to the bacterial ribosomal protein bS21 family.

The protein is Small ribosomal subunit protein bS21 of Wolinella succinogenes (strain ATCC 29543 / DSM 1740 / CCUG 13145 / JCM 31913 / LMG 7466 / NCTC 11488 / FDC 602W) (Vibrio succinogenes).